The chain runs to 156 residues: Small ribosomal subunit protein uS15 (156 aa).

Residues 1–67 (MARMHTRRRG…GVQGTPIPDV (67 aa)) are disordered. Positions 10–19 (GSSDSDKPAA) are enriched in basic and acidic residues. Residues 21–32 (EPPEWSDVDEDA) show a composition bias toward acidic residues.

Belongs to the universal ribosomal protein uS15 family. Part of the 30S ribosomal subunit.

The polypeptide is Small ribosomal subunit protein uS15 (Haloarcula marismortui (strain ATCC 43049 / DSM 3752 / JCM 8966 / VKM B-1809) (Halobacterium marismortui)).